The primary structure comprises 254 residues: Photosystem II 22 kDa protein 2, chloroplastic (254 aa).

A chloroplast-targeting transit peptide spans 1–38 (MALQQSMAMPMMVVSDLGTAPRSSPMVQLQRMKKHLVV). 2 consecutive repeat copies span residues 42 to 148 (FKSR…FVDD) and 149 to 253 (ATGL…DNDD). The next 4 membrane-spanning stretches (helical) occupy residues 86-106 (VAMLGFAASLLGEAVTGKGIL), 120-140 (AEPLLLFFILFTLLGAIGALG), 184-204 (LFVGRLAQLGIAFSLIGEIIT), and 219-239 (PINEIEPLLLFNILFFFFAAI).

This sequence belongs to the ELIP/psbS family.

It is found in the plastid. It localises to the chloroplast thylakoid membrane. In terms of biological role, involved in high light-mediated energy-dependent nonphotochemical quenching (NPQ, qE) and thermal dissipation (TD) thus regulating energy conversion in photosystem II and protecting from photoinhibition. Also seems to regulate quantum yield of electron transport in fluctuating light conditions. This is Photosystem II 22 kDa protein 2, chloroplastic from Oryza sativa subsp. japonica (Rice).